Reading from the N-terminus, the 311-residue chain is Delta-1-pyrroline-5-carboxylate reductase kk1I (311 aa).

An N-terminal signal peptide occupies residues 1 to 31 (MTKRESNTLAVLGCGMVFLVSLLDLANRLLG). Residue Asn-59 is glycosylated (N-linked (GlcNAc...) asparagine).

It belongs to the pyrroline-5-carboxylate reductase family.

The protein operates within secondary metabolite biosynthesis. Delta-1-pyrroline-5-carboxylate reductase; part of the gene cluster that mediates the biosynthesis of KK-1, a novel cyclic depsipeptide with 10 residues which is a promising active compound with high activity against many plant pathogens, especially Botrytis cinerea. Within the pathway, kk1I catalyzes the synthesis of the L-pipecolic acid residue of KK-1 from delta-1-pyrroline-5-carboxylate (P5C), a metabolic intermediate of lysine. The nonribosomal peptide synthetase (NRPS) kk1B catalyzes the elongation and cyclization of the decapeptide chain composed of 1 D-lactic acid residue (D-Lac), 1 pipecolic acid residue (Pip), 1 aspartic acid residue (Asp), 1 isoleucine residue (Ile), 1 glycine residue (Gly), 1 tyrosine residue (Tyr) and 4 valine residues (Val). The Asp, Ile and 3 Val residues are N-methylated by the 5 methyltransferase domains from the NRPS (found in modules 3, 5, 6, 7 and 9), whereas the Tyr residue is O-methylated by the cluster encoded O-methyltransferase kk1A. The thioesterase kk1J is likely to be involved in the corrective mechanism of peptide chain synthesis. The D-lactate dehydrogenase kk1H is involved in the synthesis of D-lactic acid from pyruvic acid, which is recognized by the A domain of the first kk1B module. The pyrroline-5-carboxylate reductase kk1I is involved in the synthesis of the L-pipecolic acid residue of KK-1 from delta-1-pyrroline-5-carboxylate (P5C), a metabolic intermediate of lysine. It still is unclear how kk1C and kk1D are involved in the production of KK-1. This chain is Delta-1-pyrroline-5-carboxylate reductase kk1I, found in Curvularia clavata.